The sequence spans 761 residues: Probable ubiquitin carboxyl-terminal hydrolase creB (761 aa).

The tract at residues 1-45 (MGSFLRSFRHNGGSTAPSVGAVPAKKEPQPPPMTPLEKRLLDMGP) is disordered. A compositionally biased stretch (basic and acidic residues) spans 36 to 45 (LEKRLLDMGP). Residues 55-468 (YGMENYGNTC…CAYVLFYQET (414 aa)) enclose the USP domain. Cys64 serves as the catalytic Nucleophile. Disordered regions lie at residues 113–146 (EAEA…DSPE) and 242–269 (PLME…KTPN). Positions 256–269 (SVDQSSSTGSKTPN) are enriched in polar residues. His419 functions as the Proton acceptor in the catalytic mechanism. Residues 496-761 (LKQNGFPQSP…LRKKSFSILS (266 aa)) are disordered. Positions 555-566 (PLSPVPPVPPIP) are enriched in pro residues. Residues 577–640 (KNDALAKREE…ASKAEEDRRL (64 aa)) adopt a coiled-coil conformation. Basic and acidic residues predominate over residues 580–649 (ALAKREEKER…LSTENGKEKQ (70 aa)). Positions 655–666 (RLKRGSKSLSHR) are enriched in basic residues. The span at 692 to 710 (SQSGPTSEQQQQQRQQSPP) shows a compositional bias: low complexity. Over residues 712–722 (HDQPPNSPQPG) the composition is skewed to pro residues. A compositionally biased stretch (basic and acidic residues) spans 725 to 743 (TIREDEQVNHKDSKHERTG). Positions 744 to 761 (HGKWRSFSLRKKSFSILS) are enriched in basic residues.

This sequence belongs to the peptidase C19 family. As to quaternary structure, interacts with creA, creC and qutD.

The enzyme catalyses Thiol-dependent hydrolysis of ester, thioester, amide, peptide and isopeptide bonds formed by the C-terminal Gly of ubiquitin (a 76-residue protein attached to proteins as an intracellular targeting signal).. Its function is as follows. Ubiquitin thioesterase component of the regulatory network controlling carbon source utilization through ubiquitination and deubiquitination involving creA, creB, creC, creD and acrB. Deubiquitinates the creA catabolic repressor and the quinate permease qutD. Also plays a role in response to carbon starvation and the control of extracellular proteases activity. The polypeptide is Probable ubiquitin carboxyl-terminal hydrolase creB (creB) (Neosartorya fischeri (strain ATCC 1020 / DSM 3700 / CBS 544.65 / FGSC A1164 / JCM 1740 / NRRL 181 / WB 181) (Aspergillus fischerianus)).